The primary structure comprises 269 residues: tRNA pseudouridine synthase A (269 aa).

Asp-51 serves as the catalytic Nucleophile. Tyr-109 serves as a coordination point for substrate.

It belongs to the tRNA pseudouridine synthase TruA family. As to quaternary structure, homodimer.

It catalyses the reaction uridine(38/39/40) in tRNA = pseudouridine(38/39/40) in tRNA. Formation of pseudouridine at positions 38, 39 and 40 in the anticodon stem and loop of transfer RNAs. This chain is tRNA pseudouridine synthase A, found in Aeromonas salmonicida (strain A449).